The chain runs to 207 residues: Small ribosomal subunit protein uS4 (207 aa).

An S4 RNA-binding domain is found at 98 to 164 (RRLDNVVYRM…AKFKNLVEVN (67 aa)).

Belongs to the universal ribosomal protein uS4 family. Part of the 30S ribosomal subunit. Contacts protein S5. The interaction surface between S4 and S5 is involved in control of translational fidelity.

In terms of biological role, one of the primary rRNA binding proteins, it binds directly to 16S rRNA where it nucleates assembly of the body of the 30S subunit. With S5 and S12 plays an important role in translational accuracy. This Clostridioides difficile (strain 630) (Peptoclostridium difficile) protein is Small ribosomal subunit protein uS4.